The following is a 116-amino-acid chain: Flagellar transcriptional regulator FlhD (116 aa).

Belongs to the FlhD family. Homodimer; disulfide-linked. Forms a heterohexamer composed of two FlhC and four FlhD subunits. Each FlhC binds a FlhD dimer, forming a heterotrimer, and a hexamer assembles by dimerization of two heterotrimers.

It localises to the cytoplasm. Functions in complex with FlhC as a master transcriptional regulator that regulates transcription of several flagellar and non-flagellar operons by binding to their promoter region. Activates expression of class 2 flagellar genes, including fliA, which is a flagellum-specific sigma factor that turns on the class 3 genes. Also regulates genes whose products function in a variety of physiological pathways. The polypeptide is Flagellar transcriptional regulator FlhD (Pantoea ananatis (strain LMG 20103)).